A 383-amino-acid chain; its full sequence is Acetylornithine deacetylase (383 aa).

His-80 provides a ligand contact to Zn(2+). Asp-82 is an active-site residue. Asp-112 serves as a coordination point for Zn(2+). Glu-144 is a catalytic residue. Zn(2+)-binding residues include Glu-145, Glu-169, and His-355.

It belongs to the peptidase M20A family. ArgE subfamily. In terms of assembly, homodimer. Zn(2+) serves as cofactor. Co(2+) is required as a cofactor. The cofactor is glutathione.

It is found in the cytoplasm. It carries out the reaction N(2)-acetyl-L-ornithine + H2O = L-ornithine + acetate. It participates in amino-acid biosynthesis; L-arginine biosynthesis; L-ornithine from N(2)-acetyl-L-ornithine (linear): step 1/1. In terms of biological role, catalyzes the hydrolysis of the amide bond of N(2)-acetylated L-amino acids. Cleaves the acetyl group from N-acetyl-L-ornithine to form L-ornithine, an intermediate in L-arginine biosynthesis pathway, and a branchpoint in the synthesis of polyamines. This chain is Acetylornithine deacetylase, found in Salmonella typhimurium (strain LT2 / SGSC1412 / ATCC 700720).